A 483-amino-acid polypeptide reads, in one-letter code: Glutamyl-tRNA(Gln) amidotransferase subunit A (483 aa).

Catalysis depends on charge relay system residues K76 and S151. S175 acts as the Acyl-ester intermediate in catalysis.

This sequence belongs to the amidase family. GatA subfamily. Heterotrimer of A, B and C subunits.

It catalyses the reaction L-glutamyl-tRNA(Gln) + L-glutamine + ATP + H2O = L-glutaminyl-tRNA(Gln) + L-glutamate + ADP + phosphate + H(+). Functionally, allows the formation of correctly charged Gln-tRNA(Gln) through the transamidation of misacylated Glu-tRNA(Gln) in organisms which lack glutaminyl-tRNA synthetase. The reaction takes place in the presence of glutamine and ATP through an activated gamma-phospho-Glu-tRNA(Gln). The sequence is that of Glutamyl-tRNA(Gln) amidotransferase subunit A from Pseudomonas fluorescens (strain Pf0-1).